Consider the following 475-residue polypeptide: tRNA modification GTPase MnmE (475 aa).

3 residues coordinate (6S)-5-formyl-5,6,7,8-tetrahydrofolate: arginine 24, glutamate 81, and lysine 124. In terms of domain architecture, TrmE-type G spans 220–397 (GLSVVLAGQP…LRKELLRLVG (178 aa)). Asparagine 230 serves as a coordination point for K(+). GTP is bound by residues 230 to 235 (NVGKSS), 249 to 255 (TPIAGTT), 274 to 277 (DTAG), and 378 to 380 (SAR). Serine 234 is a Mg(2+) binding site. Residues threonine 249, isoleucine 251, and threonine 254 each contribute to the K(+) site. Position 255 (threonine 255) interacts with Mg(2+). Lysine 475 is a binding site for (6S)-5-formyl-5,6,7,8-tetrahydrofolate.

Belongs to the TRAFAC class TrmE-Era-EngA-EngB-Septin-like GTPase superfamily. TrmE GTPase family. In terms of assembly, homodimer. Heterotetramer of two MnmE and two MnmG subunits. K(+) serves as cofactor.

The protein resides in the cytoplasm. In terms of biological role, exhibits a very high intrinsic GTPase hydrolysis rate. Involved in the addition of a carboxymethylaminomethyl (cmnm) group at the wobble position (U34) of certain tRNAs, forming tRNA-cmnm(5)s(2)U34. This is tRNA modification GTPase MnmE from Cupriavidus pinatubonensis (strain JMP 134 / LMG 1197) (Cupriavidus necator (strain JMP 134)).